The sequence spans 208 residues: Thymidylate kinase (208 aa).

7 to 14 (GIDGAGKT) serves as a coordination point for ATP.

Belongs to the thymidylate kinase family.

It carries out the reaction dTMP + ATP = dTDP + ADP. In terms of biological role, phosphorylation of dTMP to form dTDP in both de novo and salvage pathways of dTTP synthesis. This Xylella fastidiosa (strain 9a5c) protein is Thymidylate kinase (tmk).